We begin with the raw amino-acid sequence, 374 residues long: DNA replication and repair protein RecF (374 aa).

Residue 34 to 41 (GNNGAGKT) participates in ATP binding.

This sequence belongs to the RecF family.

It is found in the cytoplasm. The RecF protein is involved in DNA metabolism; it is required for DNA replication and normal SOS inducibility. RecF binds preferentially to single-stranded, linear DNA. It also seems to bind ATP. This is DNA replication and repair protein RecF from Rhizobium etli (strain CIAT 652).